The chain runs to 356 residues: Arginine kinase 1 (356 aa).

One can recognise a Phosphagen kinase N-terminal domain in the interval 6–91; the sequence is VLAKLEEGYA…FDPIIEDYHG (86 aa). 64-68 contacts substrate; the sequence is GVGIY. The region spanning 119–356 is the Phosphagen kinase C-terminal domain; sequence YVISTRVRCG…TELIKLEKSL (238 aa). Residues 122-126 and His-185 each bind ATP; that span reads STRVR. Glu-225 contacts substrate. Arg-229 provides a ligand contact to ATP. A substrate-binding site is contributed by Cys-271. Residues 280-284 and 309-314 contribute to the ATP site; these read RASVH and RGTRGE. A substrate-binding site is contributed by Glu-314.

Belongs to the ATP:guanido phosphotransferase family.

The enzyme catalyses L-arginine + ATP = N(omega)-phospho-L-arginine + ADP + H(+). The sequence is that of Arginine kinase 1 from Drosophila melanogaster (Fruit fly).